The following is a 615-amino-acid chain: Medium-chain acyl-CoA ligase ACSF2, mitochondrial (615 aa).

A mitochondrion-targeting transit peptide spans 1–41; the sequence is MAVYVGMLRLGRLCAGSSGVLGARVALSRSWQEARLQGVRF. Residue Lys179 is modified to N6-acetyllysine. N6-acetyllysine; alternate is present on Lys182. Position 182 is an N6-succinyllysine; alternate (Lys182). 263 to 271 serves as a coordination point for ATP; it reads TSGTTGSPK. N6-acetyllysine occurs at positions 340 and 398. Position 478 is an N6-succinyllysine (Lys478). ATP-binding residues include Asp493 and Arg508. N6-acetyllysine is present on Lys510. N6-acetyllysine; alternate is present on residues Lys544 and Lys570. Lys544 and Lys570 each carry N6-succinyllysine; alternate. Lys599 is a binding site for ATP. At Lys599 the chain carries N6-succinyllysine.

The protein belongs to the ATP-dependent AMP-binding enzyme family.

The protein resides in the mitochondrion. The enzyme catalyses a medium-chain fatty acid + ATP + CoA = a medium-chain fatty acyl-CoA + AMP + diphosphate. It catalyses the reaction octanoate + ATP + CoA = octanoyl-CoA + AMP + diphosphate. In terms of biological role, acyl-CoA synthases catalyze the initial reaction in fatty acid metabolism, by forming a thioester with CoA. Has some preference toward medium-chain substrates. Plays a role in adipocyte differentiation. This is Medium-chain acyl-CoA ligase ACSF2, mitochondrial from Pongo abelii (Sumatran orangutan).